The primary structure comprises 247 residues: Caffeoyl-CoA O-methyltransferase 2 (247 aa).

Lys-21 contacts substrate. S-adenosyl-L-methionine-binding positions include Thr-63, Glu-85, 87–88 (GV), Ser-93, Asp-111, and Ala-140. Asp-163 is a binding site for substrate. Residue Asp-163 coordinates a divalent metal cation. Asp-165 contributes to the S-adenosyl-L-methionine binding site. 2 residues coordinate a divalent metal cation: Asp-189 and Asn-190. Asn-194 is a substrate binding site.

It belongs to the class I-like SAM-binding methyltransferase superfamily. Cation-dependent O-methyltransferase family. CCoAMT subfamily. The cofactor is a divalent metal cation.

The enzyme catalyses (E)-caffeoyl-CoA + S-adenosyl-L-methionine = (E)-feruloyl-CoA + S-adenosyl-L-homocysteine + H(+). It participates in aromatic compound metabolism; phenylpropanoid biosynthesis. In terms of biological role, methylates caffeoyl-CoA to feruloyl-CoA and 5-hydroxyferuloyl-CoA to sinapoyl-CoA. Plays a role in the synthesis of feruloylated polysaccharides. Involved in the reinforcement of the plant cell wall. Also involved in the responding to wounding or pathogen challenge by the increased formation of cell wall-bound ferulic acid polymers. In Populus trichocarpa (Western balsam poplar), this protein is Caffeoyl-CoA O-methyltransferase 2 (CCOAOMT2).